The chain runs to 66 residues: Defensin-B1 (66 aa).

An N-terminal signal peptide occupies residues 1 to 23 (MNAHVLLLCTILFLLVHTPPVLG). Intrachain disulfides connect C29–C56, C36–C50, and C40–C57. Residues 61 to 66 (VLMEDG) constitute a propeptide that is removed on maturation.

This sequence belongs to the beta-defensin family. As to expression, expressed at low levels in kidney, lung, and spleen.

The protein resides in the secreted. In terms of biological role, has bactericidal activity. May act as a ligand for C-C chemokine receptor CCR6. Positively regulates the sperm motility and bactericidal activity in a CCR6-dependent manner. Binds to CCR6 and triggers Ca2+ mobilization in the sperm which is important for its motility. This Ornithorhynchus anatinus (Duckbill platypus) protein is Defensin-B1.